We begin with the raw amino-acid sequence, 218 residues long: Response regulator UvrY (218 aa).

The Response regulatory domain maps to 3–119 (NVLLVDDHEL…EVVSAIRSVY (117 aa)). Residue aspartate 54 is modified to 4-aspartylphosphate. Residues 143–208 (TESPFASLSE…ELTHLAIRHG (66 aa)) enclose the HTH luxR-type domain. The H-T-H motif DNA-binding region spans 167–186 (VNEISEQLNLSPKTVNSYRY).

Post-translationally, phosphorylated and activated by BarA.

The protein resides in the cytoplasm. In terms of biological role, member of the two-component regulatory system UvrY/BarA involved in the regulation of carbon metabolism via the CsrA/CsrB regulatory system. UvrY activates the transcription of the untranslated csrB RNA and of barA, in an autoregulatory loop. Mediates the effects of CsrA on csrB RNA by BarA-dependent and BarA-independent mechanisms. The polypeptide is Response regulator UvrY (uvrY) (Escherichia coli (strain K12)).